Reading from the N-terminus, the 530-residue chain is MNKLELWQRYRKYLGVYPEIGMMLDLSRMNFPDDFFQLMEPLMQQALEQMAELERGGIANGDEKRMVGHYWLRNPELAPTKEISSEIGFTLRAIKEFTENIHSGAISPPNGSRYTRMLIIGIGGSALGPQFVADALGSAKDKITPFFFDNTDPDGMDLVLARIGSYLKETLTIVISKSGGTKETRNGMLEAKKAYEDRGLLFARQAVAVTGRDSELDRTAAAEGWLARFPMWDWIGGRTSVTSAVGLLPAALQGLDIDGLLEGARLCDMVTRIRETRNNPAALLALMWHYATGGCGAKDMVILPYKDRLLLFSRYLQQLIMESIGKEFDRNGTQANQGIAVYGNKGSTDQHAYVQQLREGINNFFVTFIEVLKDRNGRSIEVDPGVTSGDYLSGFFQGTREALYEKGRESITITVDELSPRTIGVLIALYERAVGFYASLVNINAYHQPGVEAGKKAAGVVLEIQGKVLAHLQEKKGRGFTAEELAAAIGAEGEAEAIYRILLHAAANPDHSVVAEKGRTVFDKKFYHGG.

E322 serves as the catalytic Proton donor. Residues H351 and K455 contribute to the active site.

The protein belongs to the GPI family.

It localises to the cytoplasm. The catalysed reaction is alpha-D-glucose 6-phosphate = beta-D-fructose 6-phosphate. It functions in the pathway carbohydrate biosynthesis; gluconeogenesis. The protein operates within carbohydrate degradation; glycolysis; D-glyceraldehyde 3-phosphate and glycerone phosphate from D-glucose: step 2/4. In terms of biological role, catalyzes the reversible isomerization of glucose-6-phosphate to fructose-6-phosphate. The chain is Glucose-6-phosphate isomerase from Geotalea daltonii (strain DSM 22248 / JCM 15807 / FRC-32) (Geobacter daltonii).